The sequence spans 434 residues: Ribosomal protein uS12 methylthiotransferase RimO (434 aa).

An MTTase N-terminal domain is found at 6-122; that stretch reads SKLYLLTLGC…IIAELGGHYK (117 aa). [4Fe-4S] cluster-binding residues include Cys15, Cys51, Cys85, Cys146, Cys150, and Cys153. Residues 132–361 enclose the Radical SAM core domain; sequence LTPPYFSYLK…MAAQEEIAYA (230 aa). The TRAM domain occupies 364-434; it reads QALVGSFMPV…AFDLFGSLVL (71 aa).

Belongs to the methylthiotransferase family. RimO subfamily. Requires [4Fe-4S] cluster as cofactor.

It is found in the cytoplasm. It carries out the reaction L-aspartate(89)-[ribosomal protein uS12]-hydrogen + (sulfur carrier)-SH + AH2 + 2 S-adenosyl-L-methionine = 3-methylsulfanyl-L-aspartate(89)-[ribosomal protein uS12]-hydrogen + (sulfur carrier)-H + 5'-deoxyadenosine + L-methionine + A + S-adenosyl-L-homocysteine + 2 H(+). Functionally, catalyzes the methylthiolation of an aspartic acid residue of ribosomal protein uS12. In Chloroherpeton thalassium (strain ATCC 35110 / GB-78), this protein is Ribosomal protein uS12 methylthiotransferase RimO.